The chain runs to 598 residues: MRLFTHGQVLALLAFVNTISAIPSFSTNSYPAHPAEPVSIFSQHQPQAPLGLWTRLRNSVIERVWGVPPQQRHRGGNKHQYPPFSAPASLRTRYGDDVVLRFKLQTADEVKALVEASNILFLDVWSSTDEWIDIRLAKDVVPSLLGLLPKSLQTTHVPLIRDLPQTIYESYPSPFQSASGHERGFLPSGEPSSDVTNIFFENYQPLSVIVPWMRLLASMFPSHAQFISIGSSFEGRDIPALRVGVRPANDQKRRRTLIIEGGSHAREWIGVSTVNYVAYSLITSYGKSKSISTLLEQFDFIFIPTINPDGYVYTWETDRLWRKNRQETSLPFCPGVDLDRTWGFEWNGNATGDNPCLESYGGDKPFAGVEAHQLAEWVKEQTEQRNTKFVAYMDLHSYSQQILYPYSYSCLSQPPNLENLEELAMGIAKAIRLTNRKTYAVSSACGGLMASQKKKAKPETFLRMESTGGSALDWFYHDFGVKYAYQLKLRDRGSYGFLLPRENIVPTGKEVFNAVMMLGRFLLGESNAFQELDWDAGFQRPNKDDKPILNDDDDDDDADTNDDGIGRKDDSWIPDEYKGDNDRDESDGGWAFRRLRKR.

The first 21 residues, methionine 1–alanine 21, serve as a signal peptide directing secretion. Positions isoleucine 22–proline 174 are excised as a propeptide. One can recognise a Peptidase M14 domain in the interval asparagine 202 to leucine 522. The Zn(2+) site is built by histidine 264 and glutamate 267. Substrate-binding positions include histidine 264–glutamate 267, arginine 322, and aspartate 339–arginine 340. Cysteines 333 and 356 form a disulfide. N-linked (GlcNAc...) asparagine glycosylation is present at asparagine 349. Histidine 396 serves as a coordination point for Zn(2+). Serine 397 to tyrosine 398 provides a ligand contact to substrate. The disordered stretch occupies residues glutamine 539–arginine 598. Over residues asparagine 550 to aspartate 562 the composition is skewed to acidic residues. Residues glycine 564–asparagine 581 are compositionally biased toward basic and acidic residues.

This sequence belongs to the peptidase M14 family. The cofactor is Zn(2+).

It is found in the vacuole. The protein resides in the secreted. In terms of biological role, inactive carboxypeptidase that may play a role in cell wall organization and biogenesis. This Ajellomyces capsulatus (strain H143) (Darling's disease fungus) protein is Inactive metallocarboxypeptidase ECM14 (ECM14).